The primary structure comprises 368 residues: Probable dual-specificity RNA methyltransferase RlmN (368 aa).

E109 serves as the catalytic Proton acceptor. In terms of domain architecture, Radical SAM core spans 115–355; sequence YPDRVTMCIS…VTIRDTRGQE (241 aa). A disulfide bridge connects residues C122 and C360. [4Fe-4S] cluster is bound by residues C129, C133, and C136. S-adenosyl-L-methionine contacts are provided by residues 184–185, S218, 241–243, and N317; these read GE and SLH. C360 functions as the S-methylcysteine intermediate in the catalytic mechanism.

It belongs to the radical SAM superfamily. RlmN family. [4Fe-4S] cluster serves as cofactor.

The protein resides in the cytoplasm. The catalysed reaction is adenosine(2503) in 23S rRNA + 2 reduced [2Fe-2S]-[ferredoxin] + 2 S-adenosyl-L-methionine = 2-methyladenosine(2503) in 23S rRNA + 5'-deoxyadenosine + L-methionine + 2 oxidized [2Fe-2S]-[ferredoxin] + S-adenosyl-L-homocysteine. The enzyme catalyses adenosine(37) in tRNA + 2 reduced [2Fe-2S]-[ferredoxin] + 2 S-adenosyl-L-methionine = 2-methyladenosine(37) in tRNA + 5'-deoxyadenosine + L-methionine + 2 oxidized [2Fe-2S]-[ferredoxin] + S-adenosyl-L-homocysteine. Functionally, specifically methylates position 2 of adenine 2503 in 23S rRNA and position 2 of adenine 37 in tRNAs. The polypeptide is Probable dual-specificity RNA methyltransferase RlmN (Streptomyces coelicolor (strain ATCC BAA-471 / A3(2) / M145)).